Reading from the N-terminus, the 288-residue chain is Ribosomal RNA small subunit methyltransferase A (288 aa).

The segment covering 1 to 14 (MSKNQGGNKHQGGS) has biased composition (polar residues). The segment at 1 to 21 (MSKNQGGNKHQGGSKTHLGHR) is disordered. 6 residues coordinate S-adenosyl-L-methionine: N29, L31, G56, E77, D102, and N122.

This sequence belongs to the class I-like SAM-binding methyltransferase superfamily. rRNA adenine N(6)-methyltransferase family. RsmA subfamily.

The protein localises to the cytoplasm. The enzyme catalyses adenosine(1518)/adenosine(1519) in 16S rRNA + 4 S-adenosyl-L-methionine = N(6)-dimethyladenosine(1518)/N(6)-dimethyladenosine(1519) in 16S rRNA + 4 S-adenosyl-L-homocysteine + 4 H(+). Functionally, specifically dimethylates two adjacent adenosines (A1518 and A1519) in the loop of a conserved hairpin near the 3'-end of 16S rRNA in the 30S particle. May play a critical role in biogenesis of 30S subunits. In Idiomarina loihiensis (strain ATCC BAA-735 / DSM 15497 / L2-TR), this protein is Ribosomal RNA small subunit methyltransferase A.